Consider the following 60-residue polypeptide: Large ribosomal subunit protein bL32 (60 aa).

The span at 1-16 (MAVPKRKTTPSKRGMR) shows a compositional bias: basic residues. The interval 1 to 34 (MAVPKRKTTPSKRGMRRAHDALSSPVYIEDKDSG) is disordered.

Belongs to the bacterial ribosomal protein bL32 family.

The chain is Large ribosomal subunit protein bL32 from Maricaulis maris (strain MCS10) (Caulobacter maris).